An 81-amino-acid chain; its full sequence is UPF0729 protein C18orf32 homolog (81 aa).

Residues 45-58 are compositionally biased toward polar residues; the sequence is AASDQKVSEKSNGT. The interval 45–81 is disordered; it reads AASDQKVSEKSNGTCKPESNGEATANGSTIAADKKTD.

This sequence belongs to the UPF0729 family.

This Anoplopoma fimbria (Sablefish) protein is UPF0729 protein C18orf32 homolog.